Here is a 98-residue protein sequence, read N- to C-terminus: Large ribosomal subunit protein uL23 (98 aa).

It belongs to the universal ribosomal protein uL23 family. Part of the 50S ribosomal subunit. Contacts protein L29, and trigger factor when it is bound to the ribosome.

One of the early assembly proteins it binds 23S rRNA. One of the proteins that surrounds the polypeptide exit tunnel on the outside of the ribosome. Forms the main docking site for trigger factor binding to the ribosome. This Streptococcus gordonii (strain Challis / ATCC 35105 / BCRC 15272 / CH1 / DL1 / V288) protein is Large ribosomal subunit protein uL23.